The sequence spans 576 residues: Arginine--tRNA ligase (576 aa).

A 'HIGH' region motif is present at residues 122–132; that stretch reads PNVAKQMHVGH.

It belongs to the class-I aminoacyl-tRNA synthetase family. Monomer.

The protein resides in the cytoplasm. It catalyses the reaction tRNA(Arg) + L-arginine + ATP = L-arginyl-tRNA(Arg) + AMP + diphosphate. In Yersinia enterocolitica serotype O:8 / biotype 1B (strain NCTC 13174 / 8081), this protein is Arginine--tRNA ligase.